We begin with the raw amino-acid sequence, 123 residues long: Large ribosomal subunit protein bL21 (123 aa).

It belongs to the bacterial ribosomal protein bL21 family. As to quaternary structure, part of the 50S ribosomal subunit. Contacts protein L20.

Its function is as follows. This protein binds to 23S rRNA in the presence of protein L20. The sequence is that of Large ribosomal subunit protein bL21 from Rippkaea orientalis (strain PCC 8801 / RF-1) (Cyanothece sp. (strain PCC 8801)).